Consider the following 153-residue polypeptide: UPF0756 membrane protein LSL_0936 (153 aa).

The next 5 membrane-spanning stretches (helical) occupy residues 4 to 24 (WIFLGLILLIAYLGKNSSLLI), 26 to 46 (GAVVIVIKLFPFLSQKLYPVI), 51 to 71 (INWGVTIISVAILIPIATGQI), 86 to 106 (WIAVVCGILVAILSKHGVNLL), and 116 to 136 (LVIGTIIGVVFLKGVAAGPVI).

This sequence belongs to the UPF0756 family.

It is found in the cell membrane. The sequence is that of UPF0756 membrane protein LSL_0936 from Ligilactobacillus salivarius (strain UCC118) (Lactobacillus salivarius).